Here is a 293-residue protein sequence, read N- to C-terminus: AM-toxin biosynthesis protein 14 (293 aa).

The next 5 membrane-spanning stretches (helical) occupy residues 33 to 53 (SATA…EVYI), 73 to 93 (IAVN…ALVL), 148 to 168 (GVLA…LCVW), 183 to 203 (LVPI…LWIL), and 221 to 241 (VWCL…TPLT).

The protein resides in the membrane. It functions in the pathway mycotoxin biosynthesis. Functionally, part of the gene clusters that mediate the biosynthesis of AM-toxins, host-selective toxins (HSTs) causing Alternaria blotch on apple, a worldwide distributed disease. AM-toxins are cyclic depsipeptides containing the 3 residues 2-hydroxy-isovaleric acid (2-HIV), dehydroalanine, L-alanine which are common for all 3 AM-toxins I to III. The fourth precursor is L-alpha-amino-methoxyphenyl-valeric acid (L-Amv) for AM-toxin I, L-alpha-amino-phenyl-valeric acid (L-Apv) for AM-toxin II, and L-alpha-amino-hydroxyphenyl-valeric acid (L-Ahv) for AM-toxin III. AM-toxins have two target sites for affecting susceptible apple cells; they cause invagination of the plasma membrane and electrolyte loss and chloroplast disorganization. The non-ribosomal peptide synthetase AMT1 contains 4 catalytic modules and is responsible for activation of each residue in AM-toxin. The aldo-keto reductase AMT2 catalyzes the conversion of 2-keto-isovaleric acid (2-KIV) to 2-hydroxy-isovaleric acid (2-HIV), one of the precursor residues incorporated by AMT1 during AM-toxin biosynthesis, by reduction of its ketone to an alcohol. The cytochrome P450 monooxygenase AMT3 and the thioesterase AMT4 are also important for AM-toxin production, but their exact function within the AM-toxin biosynthesis are not known yet. Up to 21 proteins (including AMT1 to AMT4) are predicted to be involved in AM-toxin biosynthesis since their expression ishighly up-regulated in AM-toxin-producing cultures. The chain is AM-toxin biosynthesis protein 14 from Alternaria alternata (Alternaria rot fungus).